The chain runs to 226 residues: DNA mismatch repair protein MutH (226 aa).

It belongs to the MutH family.

It localises to the cytoplasm. Functionally, sequence-specific endonuclease that cleaves unmethylated GATC sequences. It is involved in DNA mismatch repair. The polypeptide is DNA mismatch repair protein MutH (Vibrio campbellii (strain ATCC BAA-1116)).